The sequence spans 248 residues: 1-(5-phosphoribosyl)-5-[(5-phosphoribosylamino)methylideneamino] imidazole-4-carboxamide isomerase (248 aa).

Asp8 (proton acceptor) is an active-site residue. The active-site Proton donor is the Asp129.

The protein belongs to the HisA/HisF family.

It localises to the cytoplasm. It catalyses the reaction 1-(5-phospho-beta-D-ribosyl)-5-[(5-phospho-beta-D-ribosylamino)methylideneamino]imidazole-4-carboxamide = 5-[(5-phospho-1-deoxy-D-ribulos-1-ylimino)methylamino]-1-(5-phospho-beta-D-ribosyl)imidazole-4-carboxamide. The protein operates within amino-acid biosynthesis; L-histidine biosynthesis; L-histidine from 5-phospho-alpha-D-ribose 1-diphosphate: step 4/9. In Rhizobium etli (strain CIAT 652), this protein is 1-(5-phosphoribosyl)-5-[(5-phosphoribosylamino)methylideneamino] imidazole-4-carboxamide isomerase.